Reading from the N-terminus, the 398-residue chain is 1-deoxy-D-xylulose 5-phosphate reductoisomerase (398 aa).

NADPH is bound by residues threonine 10, glycine 11, serine 12, isoleucine 13, asparagine 38, and asparagine 124. Lysine 125 lines the 1-deoxy-D-xylulose 5-phosphate pocket. An NADPH-binding site is contributed by glutamate 126. Aspartate 150 lines the Mn(2+) pocket. 1-deoxy-D-xylulose 5-phosphate is bound by residues serine 151, glutamate 152, serine 186, and histidine 209. Glutamate 152 is a binding site for Mn(2+). Glycine 215 is a binding site for NADPH. Positions 222, 227, 228, and 231 each coordinate 1-deoxy-D-xylulose 5-phosphate. Glutamate 231 provides a ligand contact to Mn(2+).

The protein belongs to the DXR family. It depends on Mg(2+) as a cofactor. Mn(2+) serves as cofactor.

The enzyme catalyses 2-C-methyl-D-erythritol 4-phosphate + NADP(+) = 1-deoxy-D-xylulose 5-phosphate + NADPH + H(+). The protein operates within isoprenoid biosynthesis; isopentenyl diphosphate biosynthesis via DXP pathway; isopentenyl diphosphate from 1-deoxy-D-xylulose 5-phosphate: step 1/6. Catalyzes the NADPH-dependent rearrangement and reduction of 1-deoxy-D-xylulose-5-phosphate (DXP) to 2-C-methyl-D-erythritol 4-phosphate (MEP). In Baumannia cicadellinicola subsp. Homalodisca coagulata, this protein is 1-deoxy-D-xylulose 5-phosphate reductoisomerase.